We begin with the raw amino-acid sequence, 188 residues long: uncharacterized protein (188 aa).

This is an uncharacterized protein from Haemophilus influenzae (strain ATCC 51907 / DSM 11121 / KW20 / Rd).